The sequence spans 962 residues: Splicing regulator ARVCF (962 aa).

Positions 8–46 (SAASILASVKEQEARFERLTRALEQERRHVALQLERAQQ) form a coiled coil. Residues 95-122 (TVEEDPGTPTSHVSIVTSEDGTTRRTET) are disordered. A phosphothreonine mark is found at threonine 102 and threonine 104. The segment covering 102–114 (TPTSHVSIVTSED) has biased composition (polar residues). An Omega-N-methylarginine modification is found at arginine 170. 2 disordered regions span residues 186–253 (GGGF…LPER) and 266–290 (RSLA…RRRP). Low complexity predominate over residues 206–217 (RGLGMRPPRAGP). Serine 267 bears the Phosphoserine mark. Over residues 270 to 280 (ADDEGGPELEP) the composition is skewed to acidic residues. Residues serine 332, serine 335, serine 343, and serine 345 each carry the phosphoserine modification. ARM repeat units lie at residues 348 to 387 (SARK…HLCF), 390 to 429 (EGVK…NLSY), 433 to 467 (TDNK…VTGT), 468 to 508 (LWNL…NEDS), 526 to 565 (LRNV…DTDN), and 575 to 622 (MRNL…GKKA). Positions 590–614 (DRYQEAEPGPLGSAVGSQRRRRDDA) are disordered. The residue at position 606 (serine 606) is a Phosphoserine. Positions 607 to 623 (QRRRRDDASCFGGKKAK) match the Nuclear localization signal motif. Threonine 642 is subject to Phosphothreonine. ARM repeat units follow at residues 646–686 (PKRT…AAGA), 699–738 (TYIR…NLSL), 739–781 (DRRN…AVLN), and 782–826 (TIHE…SHVL). The segment at 776 to 962 (VVAVLNTIHE…AKPQPVDSWV (187 aa)) is required for interaction with RNA-binding proteins DDX5, HNRNPH2 and SRSF1 and with mRNAs. The interval 854–962 (ATAKGPKGAL…AKPQPVDSWV (109 aa)) is disordered. A phosphoserine mark is found at serine 864 and serine 871. Phosphothreonine is present on threonine 872. Positions 878–887 (KSLEGEKTGS) are enriched in basic and acidic residues. A Phosphoserine modification is found at serine 915. A compositionally biased stretch (basic and acidic residues) spans 920–932 (ASEKEPLKLDPSR).

The protein belongs to the beta-catenin family. Component of a ribonucleoprotein complex containing mRNAs and RNA-binding proteins including DDX5, HNRNPH2 and SRSF1 as well as ARVCF. Interacts (via the extreme C-terminus) with FRMPD2 (via the PDZ 2 domain). Interacts with CCDC85B. Found in all the examined tissues including heart, brain, liver and kidney. Found at low level in lung. Expressed in dermal connective tissue, salivary gland duct and in the corneal layer (at protein level). Expressed in arrector pili muscle (at protein level). High levels detected in epithelial cells with lower levels found in fibroblasts and T lymphocytes.

It is found in the cell junction. It localises to the adherens junction. The protein resides in the nucleus. Its subcellular location is the cytoplasm. In terms of biological role, contributes to the regulation of alternative splicing of pre-mRNAs. The chain is Splicing regulator ARVCF from Homo sapiens (Human).